The following is a 105-amino-acid chain: Nucleoid-associated protein OCAR_7544/OCA5_c05960 (105 aa).

The protein belongs to the YbaB/EbfC family. Homodimer.

It localises to the cytoplasm. Its subcellular location is the nucleoid. Functionally, binds to DNA and alters its conformation. May be involved in regulation of gene expression, nucleoid organization and DNA protection. This chain is Nucleoid-associated protein OCAR_7544/OCA5_c05960, found in Afipia carboxidovorans (strain ATCC 49405 / DSM 1227 / KCTC 32145 / OM5) (Oligotropha carboxidovorans).